A 798-amino-acid chain; its full sequence is Protocadherin beta-14 (798 aa).

Positions 1–26 are cleaved as a signal peptide; it reads MEIRGALDLRKRQVLIFLVLLGLSRA. Residues 27–686 lie on the Extracellular side of the membrane; the sequence is GTESAHYSVA…APAQAQADSL (660 aa). 5 consecutive Cadherin domains span residues 35–133, 138–242, 247–347, 352–451, and 456–561; these read VAEE…SPTF, ILIK…APEF, YEVQ…PPEV, ITKR…APTF, and YTLF…SPFV. Cys-96 and Cys-102 are disulfide-bonded. Asn-169 carries N-linked (GlcNAc...) asparagine glycosylation. 5 N-linked (GlcNAc...) asparagine glycosylation sites follow: Asn-359, Asn-418, Asn-436, Asn-487, and Asn-567. The Cadherin 6 domain occupies 568 to 671; the sequence is GSAPCTELVP…LVDGFSQPYL (104 aa). A helical membrane pass occupies residues 687–711; that stretch reads TVYLVVALASVSSLFLFSVLLFVAV. Residues 712–798 are Cytoplasmic-facing; sequence RLCRRSRAAS…FRNSFGLNIQ (87 aa).

The protein localises to the cell membrane. Functionally, potential calcium-dependent cell-adhesion protein. May be involved in the establishment and maintenance of specific neuronal connections in the brain. This is Protocadherin beta-14 (PCDHB14) from Homo sapiens (Human).